A 618-amino-acid chain; its full sequence is Glutathione-regulated potassium-efflux system protein (618 aa).

The next 12 membrane-spanning stretches (helical) occupy residues 6 to 26, 32 to 52, 55 to 75, 94 to 114, 118 to 138, 152 to 172, 186 to 206, 227 to 247, 274 to 294, 298 to 318, 336 to 356, and 362 to 382; these read NPEL…VPLF, GSVL…FGIV, PTAV…IIGL, LLQV…LLGL, VSFI…MQSL, VIST…SVAF, WVSI…GKWL, ALLV…SMAM, GLLL…HLVF, ILLL…VYII, MAHG…AEVI, and ATFT…AQIA. The RCK N-terminal domain maps to 409–525; that stretch reads EDNVLVIGFG…LIKQDVDFIV (117 aa).

Belongs to the monovalent cation:proton antiporter 2 (CPA2) transporter (TC 2.A.37) family.

The protein resides in the cell inner membrane. Transport system that facilitate potassium-efflux, possibly by potassium-proton antiport. The sequence is that of Glutathione-regulated potassium-efflux system protein (kefBC) from Haemophilus influenzae (strain ATCC 51907 / DSM 11121 / KW20 / Rd).